A 165-amino-acid chain; its full sequence is Nucleotide-binding protein PMN2A_1813 (165 aa).

This sequence belongs to the YajQ family.

In terms of biological role, nucleotide-binding protein. This Prochlorococcus marinus (strain NATL2A) protein is Nucleotide-binding protein PMN2A_1813.